A 149-amino-acid chain; its full sequence is MVRVMATGVFDILHPGHVLFLREARKLGDELVVVVARDSTVERLKHKPIMNEDIRRFMVESLKPVDRAVLGHKDDMYKTVEDVRPDIIVLGYDQKFDEKEIEEECRKRGIKVKVVRLKKYGDSDLNGTRKIIFKIVDRVDDLYAKDRNS.

Residues Val-9–Phe-10, His-14–His-17, Asp-93, and Tyr-120 each bind ATP.

Belongs to the archaeal FAD synthase family. As to quaternary structure, homodimer. It depends on a divalent metal cation as a cofactor.

It catalyses the reaction FMN + ATP + H(+) = FAD + diphosphate. It functions in the pathway cofactor biosynthesis; FAD biosynthesis; FAD from FMN: step 1/1. Catalyzes the transfer of the AMP portion of ATP to flavin mononucleotide (FMN) to produce flavin adenine dinucleotide (FAD) coenzyme. The protein is FAD synthase of Aciduliprofundum boonei (strain DSM 19572 / T469).